Consider the following 253-residue polypeptide: Zinc import ATP-binding protein ZnuC (253 aa).

Residues 6-227 enclose the ABC transporter domain; that stretch reads VTLNKISVTF…FGNRGAEQLA (222 aa). 38-45 lines the ATP pocket; the sequence is GPNGAGKS.

The protein belongs to the ABC transporter superfamily. Zinc importer (TC 3.A.1.15.5) family. In terms of assembly, the complex is composed of two ATP-binding proteins (ZnuC), two transmembrane proteins (ZnuB) and a solute-binding protein (ZnuA).

Its subcellular location is the cell inner membrane. It carries out the reaction Zn(2+)(out) + ATP(in) + H2O(in) = Zn(2+)(in) + ADP(in) + phosphate(in) + H(+)(in). Part of the ABC transporter complex ZnuABC involved in zinc import. Responsible for energy coupling to the transport system. The protein is Zinc import ATP-binding protein ZnuC of Yersinia pseudotuberculosis serotype I (strain IP32953).